A 425-amino-acid polypeptide reads, in one-letter code: Adenylosuccinate synthetase (425 aa).

GTP is bound by residues 12 to 18 and 40 to 42; these read GDEGKGK and GHT. D13 acts as the Proton acceptor in catalysis. Mg(2+) contacts are provided by D13 and G40. Residues 13–16, 38–41, T126, R140, Q221, T236, and R300 contribute to the IMP site; these read DEGK and NAGH. H41 acts as the Proton donor in catalysis. Substrate is bound at residue 296–302; sequence ATTGRPR. Residues R302, 328–330, and 410–412 contribute to the GTP site; these read KLD and STG.

Belongs to the adenylosuccinate synthetase family. Homodimer. Mg(2+) is required as a cofactor.

The protein resides in the cytoplasm. The catalysed reaction is IMP + L-aspartate + GTP = N(6)-(1,2-dicarboxyethyl)-AMP + GDP + phosphate + 2 H(+). The protein operates within purine metabolism; AMP biosynthesis via de novo pathway; AMP from IMP: step 1/2. In terms of biological role, plays an important role in the de novo pathway of purine nucleotide biosynthesis. Catalyzes the first committed step in the biosynthesis of AMP from IMP. This Thermodesulfovibrio yellowstonii (strain ATCC 51303 / DSM 11347 / YP87) protein is Adenylosuccinate synthetase.